A 37-amino-acid polypeptide reads, in one-letter code: Large ribosomal subunit protein bL36c (37 aa).

The protein belongs to the bacterial ribosomal protein bL36 family.

It is found in the plastid. The protein resides in the chloroplast. The protein is Large ribosomal subunit protein bL36c of Tetradesmus obliquus (Green alga).